The primary structure comprises 281 residues: Proteasome subunit beta (281 aa).

A propeptide spans 1 to 53 (removed in mature form; by autocatalysis); sequence MEANTRSTGRLPAAFLTPGSSSFMDFLGEHQPEMLPGNRQLPPVQGVIEAPHG. The active-site Nucleophile is Thr54.

The protein belongs to the peptidase T1B family. As to quaternary structure, the 20S proteasome core is composed of 14 alpha and 14 beta subunits that assemble into four stacked heptameric rings, resulting in a barrel-shaped structure. The two inner rings, each composed of seven catalytic beta subunits, are sandwiched by two outer rings, each composed of seven alpha subunits. The catalytic chamber with the active sites is on the inside of the barrel. Has probably a gated structure, the ends of the cylinder being occluded by the N-termini of the alpha-subunits. Is likely capped by the proteasome-associated ATPase, ARC.

Its subcellular location is the cytoplasm. The catalysed reaction is Cleavage of peptide bonds with very broad specificity.. The protein operates within protein degradation; proteasomal Pup-dependent pathway. Its activity is regulated as follows. The formation of the proteasomal ATPase ARC-20S proteasome complex, likely via the docking of the C-termini of ARC into the intersubunit pockets in the alpha-rings, may trigger opening of the gate for substrate entry. Interconversion between the open-gate and close-gate conformations leads to a dynamic regulation of the 20S proteasome proteolysis activity. Peptidolytic activity is completely inhibited by lactacystin, and to a lesser extent, by N-acetyl-Leu-Leu-norleucinal (Ac-LLnL) and benzoyloxycarbonyl-Leu-Leu-Leu-vinylsulfone (Z-LLL-VS) in vitro. Functionally, component of the proteasome core, a large protease complex with broad specificity involved in protein degradation. The S.coelicolor proteasome is able to cleave oligopeptides after hydrophobic residues, but not after basic or acidic residues, thus displaying chymotrypsin-like activity but not trypsin-like activity. The chain is Proteasome subunit beta from Streptomyces coelicolor (strain ATCC BAA-471 / A3(2) / M145).